A 231-amino-acid polypeptide reads, in one-letter code: Uridylate kinase (231 aa).

Lysine 6 to glycine 9 is an ATP binding site. The involved in allosteric activation by GTP stretch occupies residues glycine 14–glycine 19. Glycine 49 and arginine 53 together coordinate ATP. UMP-binding positions include aspartate 66 and threonine 127–threonine 134. Threonine 154, tyrosine 160, and aspartate 163 together coordinate ATP.

It belongs to the UMP kinase family. As to quaternary structure, homohexamer.

Its subcellular location is the cytoplasm. It carries out the reaction UMP + ATP = UDP + ADP. It functions in the pathway pyrimidine metabolism; CTP biosynthesis via de novo pathway; UDP from UMP (UMPK route): step 1/1. With respect to regulation, allosterically activated by GTP. Inhibited by UTP. Catalyzes the reversible phosphorylation of UMP to UDP. The chain is Uridylate kinase from Thermotoga maritima (strain ATCC 43589 / DSM 3109 / JCM 10099 / NBRC 100826 / MSB8).